The primary structure comprises 459 residues: Vicilin (459 aa).

A signal peptide spans 1-28; sequence MAATTMKASFPLLMLMGISFLASVCVSS. The Cupin type-1 1 domain maps to 36–194; that stretch reads FIFKSNKFQT…SFNTDYEEIE (159 aa). Disordered stretches follow at residues 235-258, 321-346, and 430-459; these read LSKNAKSTSKKSVSSESEPFNLRS, ELVGQRNENQQEQRKEDDEEEEQGEE, and ENQKQSHFADAQPQQRERGSRETRDRLSSV. Low complexity predominate over residues 238-251; that stretch reads NAKSTSKKSVSSES. Residues 254–426 enclose the Cupin type-1 2 domain; it reads FNLRSRGPIY…AFPGSAQEVD (173 aa). Acidic residues predominate over residues 337–346; that stretch reads DDEEEEQGEE. The segment covering 444 to 459 has biased composition (basic and acidic residues); that stretch reads QRERGSRETRDRLSSV.

This sequence belongs to the 7S seed storage protein family.

It localises to the vacuole. The protein localises to the aleurone grain. In terms of biological role, seed storage protein. This Pisum sativum (Garden pea) protein is Vicilin.